The chain runs to 927 residues: DNA polymerase alpha-binding protein (927 aa).

4 WD repeats span residues 10 to 49 (FDFGGKTLVSLAPDNNTLCVANKNGLTKILKTNNPEEEPE), 134 to 173 (KIDEQVSQISYNSQMNILAVSMINGKVQIFSLTSTIPNKV), 227 to 266 (AANRICTRVAWHPKGLHFALPCADDTVKIFSIKGYSLQKT), and 273 to 313 (STKA…IHYT). 3 positions are modified to phosphoserine: serine 377, serine 379, and serine 398. Phosphothreonine occurs at positions 401 and 411. Serine 463 carries the post-translational modification Phosphoserine. A WD 5 repeat occupies 699–739 (GSDNTLLLLSKWRSPEESKWLPILDSNMEIWKMSGGKETTD).

The protein localises to the nucleus. Its function is as follows. Accessory factor for DNA replication. It plays a role in accurately duplicating the genome in vivo. The protein is DNA polymerase alpha-binding protein (CTF4) of Saccharomyces cerevisiae (strain ATCC 204508 / S288c) (Baker's yeast).